A 279-amino-acid chain; its full sequence is Sulfur carrier protein FdhD (279 aa).

Residue C122 is the Cysteine persulfide intermediate of the active site.

This sequence belongs to the FdhD family.

The protein localises to the cytoplasm. In terms of biological role, required for formate dehydrogenase (FDH) activity. Acts as a sulfur carrier protein that transfers sulfur from IscS to the molybdenum cofactor prior to its insertion into FDH. The sequence is that of Sulfur carrier protein FdhD from Thermoplasma volcanium (strain ATCC 51530 / DSM 4299 / JCM 9571 / NBRC 15438 / GSS1).